The chain runs to 696 residues: Elongation factor G (696 aa).

Positions 8-290 constitute a tr-type G domain; that stretch reads ERYRNIGIMA…AVLDYLPSPL (283 aa). GTP-binding positions include 17-24, 88-92, and 142-145; these read AHIDAGKT, DTPGH, and NKMD.

The protein belongs to the TRAFAC class translation factor GTPase superfamily. Classic translation factor GTPase family. EF-G/EF-2 subfamily.

The protein localises to the cytoplasm. Functionally, catalyzes the GTP-dependent ribosomal translocation step during translation elongation. During this step, the ribosome changes from the pre-translocational (PRE) to the post-translocational (POST) state as the newly formed A-site-bound peptidyl-tRNA and P-site-bound deacylated tRNA move to the P and E sites, respectively. Catalyzes the coordinated movement of the two tRNA molecules, the mRNA and conformational changes in the ribosome. The protein is Elongation factor G of Nitrosomonas eutropha (strain DSM 101675 / C91 / Nm57).